A 555-amino-acid polypeptide reads, in one-letter code: 4-coumarate--CoA ligase-like 9 (555 aa).

ATP-binding residues include Ser200, Ser201, Gly202, Thr203, Thr204, and Lys208. Tyr248 lines the (E)-4-coumaroyl-AMP pocket. Residue Arg269 participates in CoA binding. The interval Asp271–Glu342 is SBD1. Residue Ala320 coordinates (E)-4-coumaroyl-AMP. Residues Glu342, Ala343, Thr347, Asp431, and Arg446 each contribute to the ATP site. Ala343 and Thr347 together coordinate (E)-4-coumaroyl-AMP. Positions Ala343–Tyr410 are SBD2. (E)-4-coumaroyl-AMP-binding residues include Lys448 and Lys452. Positions 454 and 455 each coordinate CoA. Lys537 serves as a coordination point for ATP.

This sequence belongs to the ATP-dependent AMP-binding enzyme family. In terms of assembly, interacts with STS1. Mg(2+) serves as cofactor.

It catalyses the reaction (E)-4-coumarate + ATP + CoA = (E)-4-coumaroyl-CoA + AMP + diphosphate. It carries out the reaction (E)-4-coumarate + ATP + H(+) = (E)-4-coumaroyl-AMP + diphosphate. The enzyme catalyses (E)-4-coumaroyl-AMP + CoA = (E)-4-coumaroyl-CoA + AMP + H(+). Its function is as follows. Carboxylate--CoA ligase that may use 4-coumarate as substrate. Follows a two-step reaction mechanism, wherein the carboxylate substrate first undergoes adenylation by ATP, followed by a thioesterification in the presence of CoA to yield the final CoA thioester. This Oryza sativa subsp. japonica (Rice) protein is 4-coumarate--CoA ligase-like 9 (4CLL9).